The primary structure comprises 482 residues: ADP-ribosylation factor GTPase-activating protein effector protein 1 (482 aa).

The interval 116–156 (QHKSTHSHHINHQTHPIHSSSSNSNSNNRIPTKTDSSKQHT) is disordered. Residues 118 to 127 (KSTHSHHINH) show a composition bias toward basic residues. The segment covering 134 to 143 (SSSSNSNSNN) has biased composition (low complexity). The Arf-GAP domain maps to 170-297 (DELLSIVRKI…FVIDSNQGRE (128 aa)). The C4-type zinc finger occupies 186 to 210 (CCDCGSTATVEWVSINLLCILCIKC).

It localises to the cytoplasm. Functionally, GTPase-activating protein (GAP) for the ADP ribosylation factors ARF1 and ARF2. May be involved in the endocytic pathway. The polypeptide is ADP-ribosylation factor GTPase-activating protein effector protein 1 (AGE1) (Saccharomyces cerevisiae (strain ATCC 204508 / S288c) (Baker's yeast)).